The following is a 326-amino-acid chain: DNA-directed RNA polymerase subunit alpha (326 aa).

The alpha N-terminal domain (alpha-NTD) stretch occupies residues 1-232 (MQGSARNFLK…EQLSSFVELE (232 aa)). An alpha C-terminal domain (alpha-CTD) region spans residues 246 to 326 (FDPQLLAAVD…NWPPVDLMSE (81 aa)).

This sequence belongs to the RNA polymerase alpha chain family. As to quaternary structure, homodimer. The RNAP catalytic core consists of 2 alpha, 1 beta, 1 beta' and 1 omega subunit. When a sigma factor is associated with the core the holoenzyme is formed, which can initiate transcription.

It carries out the reaction RNA(n) + a ribonucleoside 5'-triphosphate = RNA(n+1) + diphosphate. DNA-dependent RNA polymerase catalyzes the transcription of DNA into RNA using the four ribonucleoside triphosphates as substrates. The protein is DNA-directed RNA polymerase subunit alpha of Ruthia magnifica subsp. Calyptogena magnifica.